A 69-amino-acid polypeptide reads, in one-letter code: Beta-defensin 11 (69 aa).

Positions 1–23 (MRTLCSLLLIGCLLFSYDTPVVG) are cleaved as a signal peptide. 3 cysteine pairs are disulfide-bonded: C35–C64, C42–C57, and C47–C65.

The protein belongs to the beta-defensin family.

The protein resides in the secreted. Functionally, has antibacterial activity. The chain is Beta-defensin 11 (Defb11) from Rattus norvegicus (Rat).